The primary structure comprises 164 residues: Peptide deformylase (164 aa).

Fe cation contacts are provided by Cys87 and His129. Residue Glu130 is part of the active site. Residue His133 participates in Fe cation binding.

It belongs to the polypeptide deformylase family. Requires Fe(2+) as cofactor.

The catalysed reaction is N-terminal N-formyl-L-methionyl-[peptide] + H2O = N-terminal L-methionyl-[peptide] + formate. Functionally, removes the formyl group from the N-terminal Met of newly synthesized proteins. Requires at least a dipeptide for an efficient rate of reaction. N-terminal L-methionine is a prerequisite for activity but the enzyme has broad specificity at other positions. This Thermotoga petrophila (strain ATCC BAA-488 / DSM 13995 / JCM 10881 / RKU-1) protein is Peptide deformylase.